Reading from the N-terminus, the 368-residue chain is Glutamate 5-kinase (368 aa).

ATP is bound at residue Lys-15. The substrate site is built by Ser-55, Asp-143, and Asn-155. ATP is bound by residues Ser-175 to Asp-176 and Ser-217 to Lys-223. The 78-residue stretch at Glu-277–Ala-354 folds into the PUA domain.

Belongs to the glutamate 5-kinase family.

It localises to the cytoplasm. It catalyses the reaction L-glutamate + ATP = L-glutamyl 5-phosphate + ADP. The protein operates within amino-acid biosynthesis; L-proline biosynthesis; L-glutamate 5-semialdehyde from L-glutamate: step 1/2. Functionally, catalyzes the transfer of a phosphate group to glutamate to form L-glutamate 5-phosphate. The chain is Glutamate 5-kinase from Sphingopyxis alaskensis (strain DSM 13593 / LMG 18877 / RB2256) (Sphingomonas alaskensis).